The primary structure comprises 152 residues: UPF0735 ACT domain-containing protein SAS1579 (152 aa).

The ACT domain occupies 75-150; that stretch reads TLILYVTDIV…YVSKVELISM (76 aa).

Belongs to the UPF0735 family.

The sequence is that of UPF0735 ACT domain-containing protein SAS1579 from Staphylococcus aureus (strain MSSA476).